The sequence spans 434 residues: F-box/LRR-repeat protein 21 (434 aa).

The F-box domain occupies 39 to 85 (LLDWGNLPHHVVLRIFQYLPLIDRARASSVCRRWNEVFHIPDLWRKF). LRR repeat units lie at residues 187–213 (DTPVDDPSLSILVANNSGTLRRLKMSS), 214–239 (CPHVSSNGILCVADHCQGLRELALNY), 242–265 (LSDKLLLALSNETHVNLEHLRIDV), 322–347 (GRSVSKEILGRLGLNCPRLTELVVCA), 349–374 (GIQVIDTELICIAEHCKNLTALGLSE), and 375–400 (CEVSCSAFIEFVRLCGRKLTHLSIME).

Part of the SCF (SKP1-CUL1-F-box) E3 ubiquitin-protein ligase complex SCF(FBXL21) composed of CUL1, SKP1, RBX1 and FBXL21. Interacts with CRY1 and CRY2.

It localises to the cytoplasm. Its subcellular location is the cytosol. The protein resides in the nucleus. The protein operates within protein modification; protein ubiquitination. Substrate-recognition component of the SCF(FBXL21) E3 ubiquitin ligase complex involved in circadian rhythm function. Plays a key role in the maintenance of both the speed and the robustness of the circadian clock oscillation. The SCF(FBXL21) complex mainly acts in the cytosol and mediates ubiquitination of CRY proteins (CRY1 and CRY2), leading to CRY proteins stabilization. The SCF(FBXL21) complex counteracts the activity of the SCF(FBXL3) complex and protects CRY proteins from degradation. Involved in the hypothalamic suprachiasmatic nucleus (SCN) clock regulating temporal organization of the daily activities. The polypeptide is F-box/LRR-repeat protein 21 (FBXL21) (Bos taurus (Bovine)).